The following is a 771-amino-acid chain: MAPGGGGGRRDGWPARGRLLLAALLLLWTRAASGQSSPQQSVILGMRLASCNKSCGMNPDGIIFVSEGSTVNLRLYGHSLGDISSNLISFTEVDDAEAVHNSTNCLELTKDLVVQRLVNVSRGNTSGMLVVITKFLRRSENMKLYALCTRPRADGPWTRWTDKDSLLFMVEEHGRFLPLWLHILLVMVLLVLSGIFSGLNLGLMALDPMELRIVQNCGTEKERKYARKIEPIRRKGNYLLCSLLLGNVLVNTSLTILLDNLIGSGIMAVASSTIGIVIFGEILPQALCSRHGLAVGANTIVLTKVFMLLTFPLSFPISKLLDFVLGQEIRTVYNREKLMEMLKVTEPYNDLVKEELNMIQGALELRTKTVEDIMTQLHDCFMIRSDAILDFNTMSEIMESGYTRIPVFEDEQSNIVDILYVKDLAFVDPDDCTPLKTITRFYNHPVHFVFHDTKLDAMLEEFKKGKSHLAIVQKVNNEGEGDPFYEVLGLVTLEDVIEEIIKSEILDESDMYTDNRTRKRVSVKNKRDFSAFKDTDNELKVKISPQLLLAAHRFLATEVPQFSPSLMSEKILLRLLKYPDVIQELRFNEHNRYCVRHYLYTRNKPADCFVLILQGKVEVEAGKENMKFETGAFSYYGTMALSVAPPDRSPALPTPLSRSASLSYPDRNTDLTSTSLAGSNQFGSCILGQYVSDFSVRALTDLQYIKITRQQYQNGLMASRMDNSPQPTFDGCATCSENFMERPELPPVDETTTLLNERNSLLHRASEEETI.

The Extracellular segment spans residues 1–175 (MAPGGGGGRR…LLFMVEEHGR (175 aa)). Residue asparagine 119 is glycosylated (N-linked (GlcNAc...) asparagine). Residues 175 to 355 (RFLPLWLHIL…EPYNDLVKEE (181 aa)) form the CNNM transmembrane domain. The helical transmembrane segment at 176-196 (FLPLWLHILLVMVLLVLSGIF) threads the bilayer. Residues 197–237 (SGLNLGLMALDPMELRIVQNCGTEKERKYARKIEPIRRKGN) are Cytoplasmic-facing. An intramembrane region (helical) is located at residues 238–258 (YLLCSLLLGNVLVNTSLTILL). Residues 259-261 (DNL) lie on the Cytoplasmic side of the membrane. A helical transmembrane segment spans residues 262-282 (IGSGIMAVASSTIGIVIFGEI). The Extracellular segment spans residues 283–290 (LPQALCSR). Residues 291–313 (HGLAVGANTIVLTKVFMLLTFPL) form a helical membrane-spanning segment. At 314 to 771 (SFPISKLLDF…LHRASEEETI (458 aa)) the chain is on the cytoplasmic side. 2 CBS domains span residues 374–435 (MTQL…CTPL) and 442–508 (YNHP…ILDE). Serine 657, serine 661, and serine 766 each carry phosphoserine.

Belongs to the ACDP family. In terms of assembly, interacts with COX11. Cornea, retina, teeth (at protein level). In the retina it is predominantly localized to the outer plexiform layer, inner plexiform layer and ganglion cell layer. In the tooth strongest expression is observed in the cell body of the ameloblasts. Expressed at high levels in the gastrointestinal tract and testis.

The protein resides in the cell membrane. In terms of biological role, probable metal transporter. The interaction with the metal ion chaperone COX11 suggests that it may play a role in sensory neuron functions. May play a role in biomineralization and retinal function. The polypeptide is Metal transporter CNNM4 (Cnnm4) (Mus musculus (Mouse)).